The primary structure comprises 295 residues: uncharacterized protein (295 aa).

Over residues 1 to 13 (MRHSVARPTRLPR) the composition is skewed to basic residues. Disordered stretches follow at residues 1 to 111 (MRHS…AGLS) and 183 to 295 (TSAF…PRDS). Residues 57–67 (AGPSAGAAARP) show a composition bias toward low complexity. Residues 68–77 (AAPPPQPREP) are compositionally biased toward pro residues. Basic and acidic residues-rich tracts occupy residues 245–257 (LRPKGARADDRRP) and 280–295 (GEPHKAGEVGNHPRDS).

This is an uncharacterized protein from Homo sapiens (Human).